The sequence spans 107 residues: Small ribosomal subunit protein bS18c (107 aa).

Residues K85–S95 show a composition bias toward basic residues. A disordered region spans residues K85–K107.

This sequence belongs to the bacterial ribosomal protein bS18 family. As to quaternary structure, part of the 30S ribosomal subunit.

It localises to the plastid. The protein localises to the chloroplast. This is Small ribosomal subunit protein bS18c from Oenothera argillicola (Appalachian evening primrose).